Consider the following 780-residue polypeptide: Subtilisin-like protease SBT5.1 (780 aa).

The N-terminal stretch at 1–25 (MMRCLTITIMFFMFFFLSVIQKCKS) is a signal peptide. Residues 26 to 106 (ETSKSGDYII…VFPDQMLQLH (81 aa)) constitute a propeptide, activation peptide. The region spanning 33-106 (YIIYMGAASS…VFPDQMLQLH (74 aa)) is the Inhibitor I9 domain. The Peptidase S8 domain maps to 110–617 (SWDFLVQESY…AGQVTIFGPS (508 aa)). The active-site Charge relay system is aspartate 147. Asparagine 197 carries N-linked (GlcNAc...) asparagine glycosylation. The active-site Charge relay system is histidine 215. A glycan (N-linked (GlcNAc...) asparagine) is linked at asparagine 230. The 85-residue stretch at 385 to 469 (IDANEEAARN…PEDGIQIMSY (85 aa)) folds into the PA domain. N-linked (GlcNAc...) asparagine glycosylation is present at asparagine 471. Residue serine 550 is the Charge relay system of the active site. Asparagine 776 carries an N-linked (GlcNAc...) asparagine glycan.

The protein belongs to the peptidase S8 family.

The protein localises to the secreted. The sequence is that of Subtilisin-like protease SBT5.1 from Arabidopsis thaliana (Mouse-ear cress).